The sequence spans 166 residues: Urease accessory protein UreE (166 aa).

The tract at residues 135 to 156 (EQGAYGGGHHHSHHGDEEFNYG) is disordered.

It belongs to the UreE family.

The protein localises to the cytoplasm. Involved in urease metallocenter assembly. Binds nickel. Probably functions as a nickel donor during metallocenter assembly. The sequence is that of Urease accessory protein UreE from Ectopseudomonas mendocina (strain ymp) (Pseudomonas mendocina).